The chain runs to 1064 residues: Importin-13 homolog A (1064 aa).

The region spanning 40–109 is the Importin N-terminal domain; that stretch reads ALPQIQQWLI…LDNLLLFLKT (70 aa). Disordered stretches follow at residues 695–722 and 839–860; these read TTQQ…NNNN and NNKK…NENN. Residues 700–722 show a composition bias toward low complexity; sequence NNNNNNNNNNNNNNNNNNNNNNN.

The protein belongs to the importin beta family. As to quaternary structure, forms a complex with an importin alpha subunit.

The protein resides in the cytoplasm. The protein localises to the nucleus envelope. In terms of biological role, required for nuclear protein import and mediates docking of import substrate to distinct nucleoporins. The protein is Importin-13 homolog A (ipo13A) of Dictyostelium discoideum (Social amoeba).